A 453-amino-acid chain; its full sequence is uncharacterized protein (453 aa).

Functionally, the presence of the two linear plasmids, termed pGKL1 and pGKL2, in strains of Kluyveromyces lactis confers the killer phenotype to the host cell, by promoting the secretion of a toxin able to inhibit the growth of sensitive strains. This is an uncharacterized protein from Kluyveromyces lactis (strain ATCC 8585 / CBS 2359 / DSM 70799 / NBRC 1267 / NRRL Y-1140 / WM37) (Yeast).